We begin with the raw amino-acid sequence, 464 residues long: UDP-glycosyltransferase 76F2 (464 aa).

UDP-alpha-D-glucose-binding positions include Ser279, 338–340 (VNQ), 355–363 (HCGWNSTIE), and 377–380 (FSDQ).

The protein belongs to the UDP-glycosyltransferase family.

This is UDP-glycosyltransferase 76F2 (UGT76F2) from Arabidopsis thaliana (Mouse-ear cress).